The chain runs to 428 residues: ORC1-type DNA replication protein 5 (428 aa).

Residues 62 to 66 (TGKSL), tyrosine 219, and arginine 231 contribute to the ATP site.

It belongs to the CDC6/cdc18 family.

Its function is as follows. Involved in regulation of DNA replication. The protein is ORC1-type DNA replication protein 5 (orc5) of Halobacterium salinarum (strain ATCC 700922 / JCM 11081 / NRC-1) (Halobacterium halobium).